We begin with the raw amino-acid sequence, 352 residues long: Quinolinate synthase (352 aa).

Iminosuccinate is bound by residues H48 and S69. Residue C114 participates in [4Fe-4S] cluster binding. Iminosuccinate-binding positions include 140–142 (YAN) and S157. Residue C201 coordinates [4Fe-4S] cluster. Residues 227-229 (HPE) and T244 each bind iminosuccinate. [4Fe-4S] cluster is bound at residue C298.

It belongs to the quinolinate synthase family. Type 1 subfamily. Requires [4Fe-4S] cluster as cofactor.

The protein localises to the cytoplasm. It catalyses the reaction iminosuccinate + dihydroxyacetone phosphate = quinolinate + phosphate + 2 H2O + H(+). It functions in the pathway cofactor biosynthesis; NAD(+) biosynthesis; quinolinate from iminoaspartate: step 1/1. Catalyzes the condensation of iminoaspartate with dihydroxyacetone phosphate to form quinolinate. The sequence is that of Quinolinate synthase from Pseudomonas syringae pv. tomato (strain ATCC BAA-871 / DC3000).